The following is a 235-amino-acid chain: Large ribosomal subunit protein uL4 (235 aa).

Residues Arg45–His75 are disordered. The segment covering Trp65–His75 has biased composition (basic residues).

It belongs to the universal ribosomal protein uL4 family. In terms of assembly, part of the 50S ribosomal subunit.

In terms of biological role, one of the primary rRNA binding proteins, this protein initially binds near the 5'-end of the 23S rRNA. It is important during the early stages of 50S assembly. It makes multiple contacts with different domains of the 23S rRNA in the assembled 50S subunit and ribosome. Functionally, this protein only weakly controls expression of the E.coli S10 operon. It is incorporated into E.coli ribosomes, however it is not as firmly associated as the endogenous protein. Its function is as follows. Forms part of the polypeptide exit tunnel. This chain is Large ribosomal subunit protein uL4 (rplD), found in Thermotoga maritima (strain ATCC 43589 / DSM 3109 / JCM 10099 / NBRC 100826 / MSB8).